Reading from the N-terminus, the 191-residue chain is Large ribosomal subunit protein uL6A (191 aa).

It belongs to the universal ribosomal protein uL6 family. As to quaternary structure, component of the large ribosomal subunit (LSU). Mature yeast ribosomes consist of a small (40S) and a large (60S) subunit. The 40S small subunit contains 1 molecule of ribosomal RNA (18S rRNA) and 33 different proteins (encoded by 57 genes). The large 60S subunit contains 3 rRNA molecules (25S, 5.8S and 5S rRNA) and 46 different proteins (encoded by 81 genes). uL6 lines the binding pocket for eukaryotic elongation factor 2 (eEF2).

Its subcellular location is the cytoplasm. In terms of biological role, component of the ribosome, a large ribonucleoprotein complex responsible for the synthesis of proteins in the cell. The small ribosomal subunit (SSU) binds messenger RNAs (mRNAs) and translates the encoded message by selecting cognate aminoacyl-transfer RNA (tRNA) molecules. The large subunit (LSU) contains the ribosomal catalytic site termed the peptidyl transferase center (PTC), which catalyzes the formation of peptide bonds, thereby polymerizing the amino acids delivered by tRNAs into a polypeptide chain. The nascent polypeptides leave the ribosome through a tunnel in the LSU and interact with protein factors that function in enzymatic processing, targeting, and the membrane insertion of nascent chains at the exit of the ribosomal tunnel. The sequence is that of Large ribosomal subunit protein uL6A from Saccharomyces cerevisiae (strain ATCC 204508 / S288c) (Baker's yeast).